We begin with the raw amino-acid sequence, 119 residues long: HTH-type transcriptional regulator SarX (119 aa).

Residues 55–78 (LKTAMDELDLSRTKLLVSIRRLIE) constitute a DNA-binding region (H-T-H motif).

This sequence belongs to the SarA family.

The protein resides in the cytoplasm. Functionally, involved in the regulation of virulence genes. Acts as a repressor of the agr locus and consequently targets genes regulated by the agr system such as sspA, hla and hlb. Binds directly to the agr promoter region. This chain is HTH-type transcriptional regulator SarX (sarX), found in Staphylococcus aureus (strain bovine RF122 / ET3-1).